Reading from the N-terminus, the 412-residue chain is MSEAESCEETSKEHRIWKKNVPYLYDTVVTKEVEWPSLSVQWMPDVTKTENSDSSMHRMIHGTHTCGGVQNHLMISKFTITTDTPEFDDAKWDSEREEFGGYGEGSAAKWDTEIKINHPGEVHRARYMPHNPFIIASRGPSDDVYIFDYTKHPSEPKDTKFRPQLRLKGHEGEGYGMSWSNTREGHLLTAGDDGMICHWDINANQTISGQIVPQSKFKGHSSNAEDVSFHALHNFVFGSVGDDRKLNLWDLRQSKPQLTAVGHTAEVNCITFNPFSEYILATGSVDKTVALWDMRNMRKKMYTLKHHNDEIFQVSFSPHYETVLASSGSDDRVIVWDISKIQDPSSSSAASSDSVPPEVIFIHAGHTGKVADFSWNPNRPWTICSSDEFNALQVWEVSNSLVSSEKWETEMI.

WD repeat units follow at residues 117 to 157, 169 to 209, 219 to 259, 262 to 302, 306 to 346, and 365 to 405; these read NHPG…SEPK, GHEG…TISG, GHSS…PQLT, GHTA…KKMY, HHND…DPSS, and GHTG…VSSE.

Belongs to the WD repeat RBAP46/RBAP48/MSI1 family. Binds directly to helix 1 of the histone fold of histone H4, a region that is not accessible when H4 is in chromatin. Interacts with zft-11; the interaction is required to suppress the activation of non-neuronal genes in neurons.

It is found in the nucleus. In terms of biological role, core histone-binding subunit that may target chromatin assembly factors, chromatin remodeling factors and histone deacetylases to their histone substrates in a manner that is regulated by nucleosomal DNA. Plays a role in regulating cell cycle progression. Required to repress the induction of vulval development by Ras signaling. In association with the zinc finger protein ztf-11, negatively regulates the expression of non-neuronal genes during neurogenesis. The polypeptide is Probable histone-binding protein rba-1 (Caenorhabditis elegans).